Here is a 138-residue protein sequence, read N- to C-terminus: Large ribosomal subunit protein uL16m (138 aa).

It belongs to the universal ribosomal protein uL16 family.

It is found in the mitochondrion. This Chondrus crispus (Carrageen Irish moss) protein is Large ribosomal subunit protein uL16m (RPL16).